The sequence spans 318 residues: Protoheme IX farnesyltransferase (318 aa).

9 consecutive transmembrane segments (helical) span residues 31 to 51 (IILL…QGPL), 55 to 75 (LAIA…TLNC), 98 to 118 (IQPF…FILL), 125 to 145 (LAAG…THGL), 153 to 173 (IVIG…AVTG), 181 to 201 (ILFA…ALMI), 206 to 228 (AAVK…QILA), 238 to 260 (LALA…LLGL), and 285 to 305 (FSIF…LPGA).

This sequence belongs to the UbiA prenyltransferase family. Protoheme IX farnesyltransferase subfamily.

It localises to the cell inner membrane. The enzyme catalyses heme b + (2E,6E)-farnesyl diphosphate + H2O = Fe(II)-heme o + diphosphate. Its pathway is porphyrin-containing compound metabolism; heme O biosynthesis; heme O from protoheme: step 1/1. In terms of biological role, converts heme B (protoheme IX) to heme O by substitution of the vinyl group on carbon 2 of heme B porphyrin ring with a hydroxyethyl farnesyl side group. The chain is Protoheme IX farnesyltransferase from Synechococcus elongatus (strain ATCC 33912 / PCC 7942 / FACHB-805) (Anacystis nidulans R2).